The following is a 196-amino-acid chain: Large ribosomal subunit protein eL15 (196 aa).

Basic residues-rich tracts occupy residues 160–172 and 186–196; these read ATRGKTSAGRKGR and PSIRAHKSRGK. The interval 160–196 is disordered; that stretch reads ATRGKTSAGRKGRGMSTRGKGTEKTRPSIRAHKSRGK.

Belongs to the eukaryotic ribosomal protein eL15 family.

The polypeptide is Large ribosomal subunit protein eL15 (rpl15e) (Methanosarcina mazei (strain ATCC BAA-159 / DSM 3647 / Goe1 / Go1 / JCM 11833 / OCM 88) (Methanosarcina frisia)).